Consider the following 109-residue polypeptide: SRA stem-loop-interacting RNA-binding protein, mitochondrial (109 aa).

Residue Ser-15 is modified to Phosphoserine. An RRM domain is found at 19 to 103 (PVAFVRRIPW…RRPKLPQTSD (85 aa)). At Thr-101 the chain carries Phosphothreonine. Ser-102 bears the Phosphoserine mark.

It is found in the mitochondrion. The protein localises to the nucleus. RNA-binding protein that acts as a nuclear receptor corepressor. Probably acts by binding the SRA RNA, and repressing the SRA-mediated nuclear receptor coactivation. Binds the STR7 loop of SRA RNA. Also able to repress glucocorticoid (GR), androgen (AR), thyroid (TR) and VDR-mediated transactivation. This chain is SRA stem-loop-interacting RNA-binding protein, mitochondrial (SLIRP), found in Pongo abelii (Sumatran orangutan).